A 433-amino-acid chain; its full sequence is tRNA-2-methylthio-N(6)-dimethylallyladenosine synthase (433 aa).

The 116-residue stretch at 4–119 folds into the MTTase N-terminal domain; it reads KKLFIQTLGC…ITQAIKTPKF (116 aa). The [4Fe-4S] cluster site is built by Cys-13, Cys-50, Cys-82, Cys-151, Cys-155, and Cys-158. In terms of domain architecture, Radical SAM core spans 137–370; it reads RNSIYKSYIN…QNRHSEILDE (234 aa). Residues 373 to 433 form the TRAM domain; that stretch reads KKQENKTFKV…KRMVLYGEII (61 aa).

This sequence belongs to the methylthiotransferase family. MiaB subfamily. In terms of assembly, monomer. It depends on [4Fe-4S] cluster as a cofactor.

Its subcellular location is the cytoplasm. The enzyme catalyses N(6)-dimethylallyladenosine(37) in tRNA + (sulfur carrier)-SH + AH2 + 2 S-adenosyl-L-methionine = 2-methylsulfanyl-N(6)-dimethylallyladenosine(37) in tRNA + (sulfur carrier)-H + 5'-deoxyadenosine + L-methionine + A + S-adenosyl-L-homocysteine + 2 H(+). Its function is as follows. Catalyzes the methylthiolation of N6-(dimethylallyl)adenosine (i(6)A), leading to the formation of 2-methylthio-N6-(dimethylallyl)adenosine (ms(2)i(6)A) at position 37 in tRNAs that read codons beginning with uridine. This Campylobacter jejuni subsp. doylei (strain ATCC BAA-1458 / RM4099 / 269.97) protein is tRNA-2-methylthio-N(6)-dimethylallyladenosine synthase.